Reading from the N-terminus, the 37-residue chain is Large ribosomal subunit protein bL36 (37 aa).

It belongs to the bacterial ribosomal protein bL36 family.

The sequence is that of Large ribosomal subunit protein bL36 from Micrococcus luteus (strain ATCC 4698 / DSM 20030 / JCM 1464 / CCM 169 / CCUG 5858 / IAM 1056 / NBRC 3333 / NCIMB 9278 / NCTC 2665 / VKM Ac-2230) (Micrococcus lysodeikticus).